Consider the following 128-residue polypeptide: Dehydrin Xero 1 (128 aa).

Polar residues predominate over residues 1–19 (MESYQNQSGAQQTHQQLDQ). Positions 1–128 (MESYQNQSGA…IKEKLPGGHH (128 aa)) are disordered. Low complexity-rich tracts occupy residues 23 to 41 (PFPATTGAYGTAGGAPAVA) and 48 to 60 (GMLHRSGSSSSSS). A compositionally biased stretch (basic and acidic residues) spans 75 to 91 (GITEKIKEKLPGHHDSN). A compositionally biased stretch (polar residues) spans 92 to 104 (KTSSLGSTTTAYD). Residues 107-128 (TVHHEKKGMMEKIKEKLPGGHH) are compositionally biased toward basic and acidic residues.

This sequence belongs to the plant dehydrin family.

This chain is Dehydrin Xero 1 (XERO1), found in Arabidopsis thaliana (Mouse-ear cress).